Consider the following 178-residue polypeptide: Ribulose bisphosphate carboxylase small subunit, chloroplastic 2 (178 aa).

Residues 1–54 (MASISSTVATVSRAAPAQANMVAPFTGLKSNVAFPATKKANDFSTLPSNGGRVQ) constitute a chloroplast transit peptide.

It belongs to the RuBisCO small chain family. In terms of assembly, heterohexadecamer of 8 large and 8 small subunits.

The protein localises to the plastid. Its subcellular location is the chloroplast. RuBisCO catalyzes two reactions: the carboxylation of D-ribulose 1,5-bisphosphate, the primary event in carbon dioxide fixation, as well as the oxidative fragmentation of the pentose substrate. Both reactions occur simultaneously and in competition at the same active site. Although the small subunit is not catalytic it is essential for maximal activity. This Flaveria pringlei protein is Ribulose bisphosphate carboxylase small subunit, chloroplastic 2.